We begin with the raw amino-acid sequence, 237 residues long: MNKDYRPGQDTRPLFDRIAPRYDLLNRLLSFGIDRRWRLAAVRELALAGAGRILDAATGTGDVALSIAAAYPRAEVVGVDLSMNMLRAAVPKLLPAEGRITLLQASCESLPLAAETCDAAIIAFGIRNVLQRQVALQEFSRVLKPGGRLLVLEFSQPTNPLLAGLYRCYSRHVLPRIGGLISDGAAYRYLPDSVEAFPARGEFLGMMEQSGFRHVRHRDLTGGIVTLYSGCRSLPGD.

Residues threonine 60 and aspartate 80 each coordinate S-adenosyl-L-methionine.

The protein belongs to the class I-like SAM-binding methyltransferase superfamily. MenG/UbiE family.

The catalysed reaction is a 2-demethylmenaquinol + S-adenosyl-L-methionine = a menaquinol + S-adenosyl-L-homocysteine + H(+). It carries out the reaction a 2-methoxy-6-(all-trans-polyprenyl)benzene-1,4-diol + S-adenosyl-L-methionine = a 5-methoxy-2-methyl-3-(all-trans-polyprenyl)benzene-1,4-diol + S-adenosyl-L-homocysteine + H(+). It participates in quinol/quinone metabolism; menaquinone biosynthesis; menaquinol from 1,4-dihydroxy-2-naphthoate: step 2/2. Its pathway is cofactor biosynthesis; ubiquinone biosynthesis. Functionally, methyltransferase required for the conversion of demethylmenaquinol (DMKH2) to menaquinol (MKH2) and the conversion of 2-polyprenyl-6-methoxy-1,4-benzoquinol (DDMQH2) to 2-polyprenyl-3-methyl-6-methoxy-1,4-benzoquinol (DMQH2). This chain is Ubiquinone/menaquinone biosynthesis C-methyltransferase UbiE, found in Syntrophotalea carbinolica (strain DSM 2380 / NBRC 103641 / GraBd1) (Pelobacter carbinolicus).